A 131-amino-acid polypeptide reads, in one-letter code: D-ribose pyranase (131 aa).

The active-site Proton donor is the H20. Substrate contacts are provided by residues D28, H98, and 120-122 (YSN).

It belongs to the RbsD / FucU family. RbsD subfamily. As to quaternary structure, homodecamer.

The protein resides in the cytoplasm. It catalyses the reaction beta-D-ribopyranose = beta-D-ribofuranose. It participates in carbohydrate metabolism; D-ribose degradation; D-ribose 5-phosphate from beta-D-ribopyranose: step 1/2. Catalyzes the interconversion of beta-pyran and beta-furan forms of D-ribose. The sequence is that of D-ribose pyranase from Lactobacillus gasseri (strain ATCC 33323 / DSM 20243 / BCRC 14619 / CIP 102991 / JCM 1131 / KCTC 3163 / NCIMB 11718 / NCTC 13722 / AM63).